The sequence spans 502 residues: Maturase K (502 aa).

This sequence belongs to the intron maturase 2 family. MatK subfamily.

Its subcellular location is the plastid. The protein resides in the chloroplast. Functionally, usually encoded in the trnK tRNA gene intron. Probably assists in splicing its own and other chloroplast group II introns. The protein is Maturase K of Ehretia anacua (Sandpaper tree).